Here is a 517-residue protein sequence, read N- to C-terminus: MTEVRTRFAPSPSGFLHVGGARTALFNYLYAKAKKGKFLLRIEDTDQDRSTEASFKIILESLKWLGMEWDEGPGVGGPNGPYTQSERIHIYKEYTDKLIQEKKAYRCFCTAEELEGKKKQADAMGIPYIYDGKCSDLSDAEIGSQLEKKIPFTVRFKTPHKIVIVDDMIQGKVKFESKLIGDFIIVKSDGFPSYNYAVVIDDALMKITHVIRGVGHLSNTPRQILIFEAFGFPLPRFAHASEIVGTDGKKLSKRAGATSVLAFRDLGYSSETMRNYMALLGWTSPDGKEYMSDEELCSVFDVERCSKSPATFDVFKKLKEEEKESVDFNKLTILGLAEYLNPKSKLNWMSNKYIRDTKIETLGKALEPFLKDCQIPEAFKSGENPQLLSILDSVRVYLDRLIQAPPYIEEFFLENLSFENDEAKQLVLEGKGKEVVAEFYRIVKESSLTTPDAYKESMAKVGEITGEKGRTLFMPIRAITTGKSHGLELPILFSLLGQEKMVKRMEQLAGILGISLR.

Positions 10-20 (PSPSGFLHVGG) match the 'HIGH' region motif. Cys107, Cys109, Cys134, and Asp136 together coordinate Zn(2+). Residues 250 to 254 (KLSKR) carry the 'KMSKS' region motif. Position 253 (Lys253) interacts with ATP.

Belongs to the class-I aminoacyl-tRNA synthetase family. Glutamate--tRNA ligase type 1 subfamily. In terms of assembly, monomer. Zn(2+) is required as a cofactor.

It is found in the cytoplasm. The catalysed reaction is tRNA(Glu) + L-glutamate + ATP = L-glutamyl-tRNA(Glu) + AMP + diphosphate. In terms of biological role, catalyzes the attachment of glutamate to tRNA(Glu) in a two-step reaction: glutamate is first activated by ATP to form Glu-AMP and then transferred to the acceptor end of tRNA(Glu). This chain is Glutamate--tRNA ligase, found in Leptospira biflexa serovar Patoc (strain Patoc 1 / ATCC 23582 / Paris).